The following is a 56-amino-acid chain: Ovomucoid (56 aa).

Residues 6–56 form the Kazal-like domain; the sequence is VDCSEYPKPECTAEERPICGSDNKTYGNKCNFCNAVVESNGTLTLRNFGKC. Cystine bridges form between Cys-8–Cys-38, Cys-16–Cys-35, and Cys-24–Cys-56. An N-linked (GlcNAc...) asparagine glycan is attached at Asn-45.

It localises to the secreted. This chain is Ovomucoid, found in Bambusicola thoracicus (Chinese bamboo-partridge).